Reading from the N-terminus, the 323-residue chain is Ethanolamine-phosphate cytidylyltransferase (323 aa).

Belongs to the cytidylyltransferase family.

It localises to the cytoplasm. The protein localises to the nucleus. It catalyses the reaction phosphoethanolamine + CTP + H(+) = CDP-ethanolamine + diphosphate. It participates in phospholipid metabolism; phosphatidylethanolamine biosynthesis; phosphatidylethanolamine from ethanolamine: step 2/3. Ethanolamine-phosphate cytidylyltransferase which catalyzes the second step of phosphatidylethanolamine biosynthesis. Involved in the maintenance of plasma membrane and required for proper sporulation. The chain is Ethanolamine-phosphate cytidylyltransferase from Saccharomyces cerevisiae (strain ATCC 204508 / S288c) (Baker's yeast).